The sequence spans 361 residues: Nicotinate-nucleotide--dimethylbenzimidazole phosphoribosyltransferase (361 aa).

Glu-320 acts as the Proton acceptor in catalysis.

It belongs to the CobT family. In terms of assembly, homodimer.

The catalysed reaction is 5,6-dimethylbenzimidazole + nicotinate beta-D-ribonucleotide = alpha-ribazole 5'-phosphate + nicotinate + H(+). The protein operates within nucleoside biosynthesis; alpha-ribazole biosynthesis; alpha-ribazole from 5,6-dimethylbenzimidazole: step 1/2. In terms of biological role, catalyzes the synthesis of alpha-ribazole-5'-phosphate from nicotinate mononucleotide (NAMN) and 5,6-dimethylbenzimidazole (DMB). In Shigella boydii serotype 18 (strain CDC 3083-94 / BS512), this protein is Nicotinate-nucleotide--dimethylbenzimidazole phosphoribosyltransferase.